The sequence spans 135 residues: Transcription antitermination protein NusB (135 aa).

The tract at residues 115-135 (ATPAESTGRGSAVDSIPGQPS) is disordered.

The protein belongs to the NusB family.

In terms of biological role, involved in transcription antitermination. Required for transcription of ribosomal RNA (rRNA) genes. Binds specifically to the boxA antiterminator sequence of the ribosomal RNA (rrn) operons. The chain is Transcription antitermination protein NusB from Frankia casuarinae (strain DSM 45818 / CECT 9043 / HFP020203 / CcI3).